The chain runs to 148 residues: MEPEAFEICPYDPHHRIPLSRFQYHLASCRRKNPKKAKKMATCKYNACHVVPIKNLEEHEAVCVNRSAVEEEDTENPLKVSPPSSEQNDDTQQVSPCLPSPDIWNVDGANCQHVFVLKTFFPQKVVCENDTKESARETSPQKILRPGQ.

CHHC U11-48K-type zinc fingers lie at residues 6 to 33 (FEIC…RRKN) and 40 to 67 (MATC…VNRS). 8 residues coordinate Zn(2+): Cys9, His15, His25, Cys29, Cys43, His49, His59, and Cys63. The segment at 67-99 (SAVEEEDTENPLKVSPPSSEQNDDTQQVSPCLP) is disordered. The segment covering 82–95 (PPSSEQNDDTQQVS) has biased composition (polar residues).

The protein belongs to the UPF0224 (FAM112) family.

In Homo sapiens (Human), this protein is Gametocyte-specific factor 1-like (GTSF1L).